The chain runs to 346 residues: Protein RecA (346 aa).

68–75 (GPESSGKT) contributes to the ATP binding site.

The protein belongs to the RecA family.

The protein localises to the cytoplasm. Its function is as follows. Can catalyze the hydrolysis of ATP in the presence of single-stranded DNA, the ATP-dependent uptake of single-stranded DNA by duplex DNA, and the ATP-dependent hybridization of homologous single-stranded DNAs. It interacts with LexA causing its activation and leading to its autocatalytic cleavage. This chain is Protein RecA, found in Heliobacterium modesticaldum (strain ATCC 51547 / Ice1).